A 128-amino-acid polypeptide reads, in one-letter code: L-ectoine synthase (128 aa).

It belongs to the ectoine synthase family.

The enzyme catalyses (2S)-4-acetamido-2-aminobutanoate = L-ectoine + H2O. It participates in amine and polyamine biosynthesis; ectoine biosynthesis; L-ectoine from L-aspartate 4-semialdehyde: step 3/3. Catalyzes the circularization of gamma-N-acetyl-alpha,gamma-diaminobutyric acid (ADABA) to ectoine (1,4,5,6-tetrahydro-2-methyl-4-pyrimidine carboxylic acid), which is an excellent osmoprotectant. This Vibrio atlanticus (strain LGP32) (Vibrio splendidus (strain Mel32)) protein is L-ectoine synthase.